Here is a 525-residue protein sequence, read N- to C-terminus: GMP synthase [glutamine-hydrolyzing] (525 aa).

The Glutamine amidotransferase type-1 domain occupies 8 to 206 (PLLILDFGSQ…VVDICKASTD (199 aa)). C85 functions as the Nucleophile in the catalytic mechanism. Catalysis depends on residues H180 and E182. The GMPS ATP-PPase domain maps to 207–400 (WTPEHIIDEA…LGLPHDMVYR (194 aa)). Residue 234–240 (SGGVDSS) coordinates ATP.

Homodimer.

The enzyme catalyses XMP + L-glutamine + ATP + H2O = GMP + L-glutamate + AMP + diphosphate + 2 H(+). It functions in the pathway purine metabolism; GMP biosynthesis; GMP from XMP (L-Gln route): step 1/1. In terms of biological role, catalyzes the synthesis of GMP from XMP. The polypeptide is GMP synthase [glutamine-hydrolyzing] (Legionella pneumophila (strain Paris)).